We begin with the raw amino-acid sequence, 132 residues long: Agouti-signaling protein (132 aa).

Residues 1–22 (MDVTXLLLATLLVFLCCFAAYS) form the signal peptide. Residue asparagine 39 is glycosylated (N-linked (GlcNAc...) asparagine). The segment at 62–93 (ISRKEAENKRSSKKEASKQKVARPRTPLSVPC) is disordered. Positions 64–79 (RKEAENKRSSKKEASK) are enriched in basic and acidic residues. Cystine bridges form between cysteine 93-cysteine 108, cysteine 100-cysteine 114, cysteine 107-cysteine 125, cysteine 111-cysteine 132, and cysteine 116-cysteine 123. The Agouti domain occupies 93–132 (CVSTRGSCKPPAPACCHPCASCQCRFFRSACSCRVINVNC).

It localises to the secreted. Functionally, involved in the regulation of melanogenesis. The binding of ASP to MC1R precludes alpha-MSH initiated signaling and thus blocks production of cAMP, leading to a down-regulation of eumelanogenesis (brown/black pigment) and thus increasing synthesis of pheomelanin (yellow/red pigment). This is Agouti-signaling protein (ASIP) from Leontopithecus chrysomelas (Golden-headed lion tamarin).